The primary structure comprises 150 residues: Cytochrome c oxidase subunit 5A, mitochondrial (150 aa).

The N-terminal 41 residues, 1 to 41, are a transit peptide targeting the mitochondrion; the sequence is MLGAALRRCAVAAAARAGPRGLLHSAPTPGPAAAIQSVRCY. Residues 2-17 carry the SIFI-degron motif; the sequence is LGAALRRCAVAAAARA. K87 and K113 each carry N6-acetyllysine. Phosphothreonine is present on T141.

This sequence belongs to the cytochrome c oxidase subunit 5A family. In terms of assembly, component of the cytochrome c oxidase (complex IV, CIV), a multisubunit enzyme composed of 14 subunits. The complex is composed of a catalytic core of 3 subunits MT-CO1, MT-CO2 and MT-CO3, encoded in the mitochondrial DNA, and 11 supernumerary subunits COX4I, COX5A, COX5B, COX6A, COX6B, COX6C, COX7A, COX7B, COX7C, COX8 and NDUFA4, which are encoded in the nuclear genome. The complex exists as a monomer or a dimer and forms supercomplexes (SCs) in the inner mitochondrial membrane with NADH-ubiquinone oxidoreductase (complex I, CI) and ubiquinol-cytochrome c oxidoreductase (cytochrome b-c1 complex, complex III, CIII), resulting in different assemblies (supercomplex SCI(1)III(2)IV(1) and megacomplex MCI(2)III(2)IV(2)). Interacts with AFG1L. Interacts with RAB5IF. Post-translationally, in response to mitochondrial stress, the precursor protein is ubiquitinated by the SIFI complex in the cytoplasm before mitochondrial import, leading to its degradation. Within the SIFI complex, UBR4 initiates ubiquitin chain that are further elongated or branched by KCMF1.

The protein resides in the mitochondrion inner membrane. It participates in energy metabolism; oxidative phosphorylation. In terms of biological role, component of the cytochrome c oxidase, the last enzyme in the mitochondrial electron transport chain which drives oxidative phosphorylation. The respiratory chain contains 3 multisubunit complexes succinate dehydrogenase (complex II, CII), ubiquinol-cytochrome c oxidoreductase (cytochrome b-c1 complex, complex III, CIII) and cytochrome c oxidase (complex IV, CIV), that cooperate to transfer electrons derived from NADH and succinate to molecular oxygen, creating an electrochemical gradient over the inner membrane that drives transmembrane transport and the ATP synthase. Cytochrome c oxidase is the component of the respiratory chain that catalyzes the reduction of oxygen to water. Electrons originating from reduced cytochrome c in the intermembrane space (IMS) are transferred via the dinuclear copper A center (CU(A)) of subunit 2 and heme A of subunit 1 to the active site in subunit 1, a binuclear center (BNC) formed by heme A3 and copper B (CU(B)). The BNC reduces molecular oxygen to 2 water molecules using 4 electrons from cytochrome c in the IMS and 4 protons from the mitochondrial matrix. The polypeptide is Cytochrome c oxidase subunit 5A, mitochondrial (COX5A) (Plecturocebus donacophilus (Bolivian gray titi monkey)).